A 457-amino-acid polypeptide reads, in one-letter code: UDP-glucosyltransferase 45 (457 aa).

Catalysis depends on H21, which acts as the Proton acceptor. Position 21 (H21) interacts with an anthocyanidin. D112 functions as the Charge relay in the catalytic mechanism. Residues T134, Q336, H351, W354, N355, S356, E359, D375, and Q376 each coordinate UDP-alpha-D-glucose.

It belongs to the UDP-glycosyltransferase family.

It carries out the reaction (20S)-protopanaxadiol + UDP-alpha-D-glucose = (20S)-ginsenoside Rh2 + UDP + H(+). It functions in the pathway secondary metabolite biosynthesis; terpenoid biosynthesis. Functionally, component of the triterpene saponins (e.g. PPD-type ginsenosides) biosynthetic pathway. Glycosyltransferase that catalyzes the biosynthesis of ginsenoside Rh2 from protopanaxadiol (PPD). This is UDP-glucosyltransferase 45 from Panax ginseng (Korean ginseng).